The following is a 199-amino-acid chain: MQYPEAISRLIESFTKLPGIGPKTAVRLAFHVLDMEEDDVLMFGKALVSAKRDISYCSICGNITDKDPCYVCSDKHRNRTIVCVVQDSRDVIAMEKMRDYQGLYHVLHGAISPMEGIGPEDINVSSLLTRLQADEAITEIILATNPNIEGEATAMYLSRLLKPTGIRVTRIAHGLPVGGDLEYADEVTLSRAMEGRREL.

The segment at 57–72 (CSICGNITDKDPCYVC) adopts a C4-type zinc-finger fold. The region spanning 80–176 (TIVCVVQDSR…RVTRIAHGLP (97 aa)) is the Toprim domain.

It belongs to the RecR family.

Its function is as follows. May play a role in DNA repair. It seems to be involved in an RecBC-independent recombinational process of DNA repair. It may act with RecF and RecO. In Exiguobacterium sibiricum (strain DSM 17290 / CCUG 55495 / CIP 109462 / JCM 13490 / 255-15), this protein is Recombination protein RecR.